The chain runs to 459 residues: Polycomb protein mes-6 (459 aa).

WD repeat units lie at residues 146-186, 192-231, 305-346, 370-409, and 415-454; these read SVGW…CLIV, CHAGTILSVDWSTDGDFILSCGFDHQLMEWDLSVKQVKEH, MHSD…GEVE, SGSAWFIKFAVDPRRRWLVCGGAGGSVMFFDLRNNEETNP, and VGSRTVRQASFSTCGRFLVLVTDEGFVCRFDRVSASVDAK.

The protein belongs to the WD repeat ESC family. In terms of assembly, interacts directly with the N-terminal domain of mes-2. Forms a heterotrimeric complex with mes-2 and mes-3. Does not interact with mes-4. In adults, it is predominantly expressed in the germline, and weakly expressed in intestinal cells.

The protein localises to the nucleus. In terms of biological role, polycomb group (PcG) protein. PcG proteins act by forming multiprotein complexes, which are required to maintain the transcriptionally repressive state of homeotic genes throughout development. In association with the nfya-1-NF-Y complex, may play a role in repressing the expression of the homeobox protein egl-5 in tissues such as the head. PcG proteins are not required to initiate repression, but to maintain it during later stages of development. The mes-2/mes-3/mes-6 complex may participate in the global inactivation of the X chromosomes in germline cells. The complex may act via methylation of histone H3 'Lys-27', rendering chromatin heritably changed in its expressibility. This complex is required to exclude mes-4 from the inactivated X-chromosomes in germline cells. Required for small-RNA-induced H3K27 trimethylation. This Caenorhabditis elegans protein is Polycomb protein mes-6.